Consider the following 831-residue polypeptide: MEEDELELAAGLEAALELAPAVQAAIEQVFPSQDPLDRADFNAVEYINTLFPTEQSLANIDEVVNKIRLKIRKLDDNIRTVVRGQTNVGQDGRQALEEAQKAIQQLFGKIKDIKDKAEKSEQMVKEITRDIKQLDHAKRHLTTSITTLNHLHMLAGGVDSLEAMTRRRQYGEVANLLQGVVNVLEHFNKYMGIPQIRQLSERVKAAQNELGQQILADFEEAFPSQGTKRPGGPSNVLRDACLVANVLDPRIKQEIIKKFIKQHLSEYLVLFQENQDVAWLDKIDRRYAWIKRQLVDYEEKYGRMFPQEWCMTERIAVEFCHVTRTELAKIMRTRAKEIEVKLLLFAIQRTTNFEGLLAKRFSGCTLADGTVKKPEAPPPSTNPFLEDETGTETDEIVIEKSDADKPKKPKVPDNPFHGIVSKCFEPHLYVYIESQDKNLSELIDRFVADFKAQGPPKPNVDEGGAVLPSCADLFVYYKKCMVQCSQLSTGEPMIALTTIFQKYLREYAWKILSGNLPKTTSSSGGLTITSLLKEKEGSEVAKFTLEELCLICSILSTAEYCLATTQQLEEKLKEKVDASLVERINLTGETDTFSIVISNSIQLLVQDLDAACDPALTAMSKMQWQNVEHVGDQSPYVTSVILHIKQNVPIIRDNLASTRKYFTQFCIKFANSFIPKFINHLFKCKPISMVGAEQLLLDTHSLKMVLLDLPSIGSQVVRKAPASYTRIVVKGMTRAEMILKVVMAPHEPPVVFVDNYIKLLADCSTDTFQKILDMKGLKRSEQSSMLELFRQRLPAPPSGVENSGSLSLSAPTPEQESSRIRKLEKLIKKRL.

Residues 54–141 adopt a coiled-coil conformation; it reads EQSLANIDEV…KQLDHAKRHL (88 aa). Disordered regions lie at residues 370 to 391 and 794 to 819; these read TVKKPEAPPPSTNPFLEDETGT and PAPPSGVENSGSLSLSAPTPEQESSR. Positions 800–815 are enriched in polar residues; that stretch reads VENSGSLSLSAPTPEQ.

It belongs to the VPS53 family. Component of the Golgi-associated retrograde protein (GARP) complex. Component of the endosome-associated retrograde protein (EARP) complex.

The protein resides in the golgi apparatus. It is found in the trans-Golgi network membrane. It localises to the endosome membrane. Its subcellular location is the recycling endosome. Functionally, acts as a component of the GARP complex that is involved in retrograde transport from early and late endosomes to the trans-Golgi network (TGN). Acts as a component of the EARP complex that is involved in endocytic recycling. The chain is Vacuolar protein sorting-associated protein 53 homolog (VPS53) from Gallus gallus (Chicken).